A 913-amino-acid polypeptide reads, in one-letter code: Eukaryotic translation initiation factor 3 subunit C (913 aa).

Residues 1–44 (MSRFFTTGSDSESESSLSGEELVTKPVGGNYGKQPLLLSEDEED) are disordered. Residues 8–21 (GSDSESESSLSGEE) show a composition bias toward low complexity. Serine 9, serine 11, serine 13, serine 15, serine 16, serine 18, and serine 39 each carry phosphoserine. Lysine 99 carries the post-translational modification N6-acetyllysine. 2 disordered regions span residues 157–301 (TSYK…GGEW) and 522–542 (QLTP…NEGE). Phosphoserine is present on residues serine 166, serine 178, serine 181, and serine 182. The segment covering 166–190 (SADEDAEKNEEDSEGSSDEDEDEDG) has biased composition (acidic residues). A compositionally biased stretch (basic and acidic residues) spans 199–216 (KKSEAPSGESRKFLKKMD). Residues 217-232 (DEDEDSEDSEDDEDWD) are compositionally biased toward acidic residues. The segment covering 261 to 278 (PTTDEDKKAAEKKREDKA) has biased composition (basic and acidic residues). A compositionally biased stretch (polar residues) spans 522 to 531 (QLTPPEGSSK). Threonine 524 bears the Phosphothreonine mark. Lysine 643 bears the N6-acetyllysine mark. The PCI domain maps to 673–849 (FHLHINLELL…QTVVMHRTEP (177 aa)). The interval 885 to 913 (FRDQKDGYRKNEGYMRRGGYRQQQSQTAY) is disordered. The span at 886–899 (RDQKDGYRKNEGYM) shows a compositional bias: basic and acidic residues. The residue at position 909 (serine 909) is a Phosphoserine.

In terms of assembly, component of the eukaryotic translation initiation factor 3 (eIF-3) complex, which is composed of 13 subunits: EIF3A, EIF3B, EIF3C, EIF3D, EIF3E, EIF3F, EIF3G, EIF3H, EIF3I, EIF3J, EIF3K, EIF3L and EIF3M. The eIF-3 complex appears to include 3 stable modules: module A is composed of EIF3A, EIF3B, EIF3G and EIF3I; module B is composed of EIF3F, EIF3H, and EIF3M; and module C is composed of EIF3C, EIF3D, EIF3E, EIF3K and EIF3L. EIF3C of module C binds EIF3B of module A and EIF3H of module B, thereby linking the three modules. EIF3J is a labile subunit that binds to the eIF-3 complex via EIF3B. The eIF-3 complex interacts with RPS6KB1 under conditions of nutrient depletion. Mitogenic stimulation leads to binding and activation of a complex composed of MTOR and RPTOR, leading to phosphorylation and release of RPS6KB1 and binding of EIF4B to eIF-3. Identified in a HCV IRES-mediated translation complex, at least composed of EIF3C, IGF2BP1, RPS3 and HCV RNA-replicon. Interacts with ALKBH4, IFIT1 and IFIT2. Interacts with BZW2/5MP1. Post-translationally, phosphorylated. Phosphorylation is enhanced upon serum stimulation.

It is found in the cytoplasm. Component of the eukaryotic translation initiation factor 3 (eIF-3) complex, which is required for several steps in the initiation of protein synthesis. The eIF-3 complex associates with the 40S ribosome and facilitates the recruitment of eIF-1, eIF-1A, eIF-2:GTP:methionyl-tRNAi and eIF-5 to form the 43S pre-initiation complex (43S PIC). The eIF-3 complex stimulates mRNA recruitment to the 43S PIC and scanning of the mRNA for AUG recognition. The eIF-3 complex is also required for disassembly and recycling of post-termination ribosomal complexes and subsequently prevents premature joining of the 40S and 60S ribosomal subunits prior to initiation. The eIF-3 complex specifically targets and initiates translation of a subset of mRNAs involved in cell proliferation, including cell cycling, differentiation and apoptosis, and uses different modes of RNA stem-loop binding to exert either translational activation or repression. The protein is Eukaryotic translation initiation factor 3 subunit C of Homo sapiens (Human).